A 391-amino-acid polypeptide reads, in one-letter code: Na(+)/H(+) antiporter NhaA (391 aa).

11 consecutive transmembrane segments (helical) span residues 14–34 (GGII…LGAT), 59–79 (MLLW…GLEV), 95–115 (AFPV…YLAF), 125–145 (GWAI…ALLG), 154–174 (IFLM…IALF), 180–200 (SILS…LNIF), 219–239 (VLKS…FIPL), 254–274 (VLHP…NAGV), 292–312 (IIAG…WLAL), 328–348 (IMAV…ISTL), and 357–377 (LIVW…FVGY).

The protein belongs to the NhaA Na(+)/H(+) (TC 2.A.33) antiporter family.

The protein resides in the cell inner membrane. It catalyses the reaction Na(+)(in) + 2 H(+)(out) = Na(+)(out) + 2 H(+)(in). In terms of biological role, na(+)/H(+) antiporter that extrudes sodium in exchange for external protons. The sequence is that of Na(+)/H(+) antiporter NhaA from Enterobacter sp. (strain 638).